The sequence spans 259 residues: Pyridoxine 5'-phosphate synthase (259 aa).

Residue Asn-6 coordinates 3-amino-2-oxopropyl phosphate. Residue 8–9 (DH) participates in 1-deoxy-D-xylulose 5-phosphate binding. Arg-17 provides a ligand contact to 3-amino-2-oxopropyl phosphate. His-42 acts as the Proton acceptor in catalysis. Residues Arg-44 and His-49 each coordinate 1-deoxy-D-xylulose 5-phosphate. The active-site Proton acceptor is the Glu-69. Residue Thr-99 participates in 1-deoxy-D-xylulose 5-phosphate binding. The active-site Proton donor is the His-212. 3-amino-2-oxopropyl phosphate contacts are provided by residues Gly-213 and 234 to 235 (GH).

Belongs to the PNP synthase family. As to quaternary structure, homooctamer; tetramer of dimers.

It is found in the cytoplasm. It carries out the reaction 3-amino-2-oxopropyl phosphate + 1-deoxy-D-xylulose 5-phosphate = pyridoxine 5'-phosphate + phosphate + 2 H2O + H(+). Its pathway is cofactor biosynthesis; pyridoxine 5'-phosphate biosynthesis; pyridoxine 5'-phosphate from D-erythrose 4-phosphate: step 5/5. Catalyzes the complicated ring closure reaction between the two acyclic compounds 1-deoxy-D-xylulose-5-phosphate (DXP) and 3-amino-2-oxopropyl phosphate (1-amino-acetone-3-phosphate or AAP) to form pyridoxine 5'-phosphate (PNP) and inorganic phosphate. This chain is Pyridoxine 5'-phosphate synthase, found in Nautilia profundicola (strain ATCC BAA-1463 / DSM 18972 / AmH).